The sequence spans 248 residues: MALCEAAGCGSALLWPRLLLFGDSITQFSFQQGGWGASLADRLVRKCDVLNRGFSGYNTRWAKIILPRLIRKGNSLDIPVAVTIFFGANDSALKDENPKQHIPLEEYAANLKSMVQYLKSVDIPENRVILITPTPLCETAWEEQCIIQGCKLNRLNSVVGEYANACLQVAQDCGTDVLDLWTLMQDSQDFSSYLSDGLHLSPKGNEFLFSHLWPLIEKKVSSLPLLLPYWRDVAEAKPELSLLGDGDH.

Residue serine 24 is the Nucleophile of the active site. Lysine 63 is modified (N6-succinyllysine). Residue aspartate 196 is the Proton donor of the active site. The active-site Proton acceptor is the histidine 199.

The protein belongs to the 'GDSL' lipolytic enzyme family. IAH1 subfamily.

Its function is as follows. Probable lipase. This chain is Isoamyl acetate-hydrolyzing esterase 1 homolog (IAH1), found in Homo sapiens (Human).